A 386-amino-acid chain; its full sequence is Leupaxin (386 aa).

M1 is subject to N-acetylmethionine. Residues 3–15 carry the LD motif 1 motif; that stretch reads ELDALLEELERCT. Phosphoserine is present on S19. The interval 19–52 is disordered; sequence SEEYSNPVSCHLDQQSTEESKIPQTPKTLSSQGN. The residue at position 22 (Y22) is a Phosphotyrosine. Residues 22-52 show a composition bias toward polar residues; sequence YSNPVSCHLDQQSTEESKIPQTPKTLSSQGN. Residue S54 is modified to Phosphoserine. Phosphotyrosine is present on Y62. Short sequence motifs (LD motif) lie at residues 70-82 and 92-103; these read NVYS…KESV and QLDELMAHLSEM. A Phosphotyrosine; by LYN modification is found at Y72. S81 is subject to Phosphoserine. 4 LIM zinc-binding domains span residues 150 to 208, 209 to 267, 268 to 326, and 327 to 386; these read GYCA…RLFS, PRCA…AMFS, PKCG…HRRG, and TLCH…LFSQ.

The protein belongs to the paxillin family. In terms of assembly, interacts with unphosphorylated ITGA4. Interacts with AR and SRF. Interacts with PTK2B/PYK2, PTPN22 and PTPN12. Interacts (via LD motif 3) with LYN and the interaction is induced upon B-cell antigen receptor (BCR) activation. Interacts (via LD motif 3) with PTK2/FAK. Phosphorylated on tyrosine residues. Phosphorylation on Tyr-72 is important for its inhibitory function. Bombesin stimulates phosphorylation on Tyr-22, Tyr-62 and Tyr-72. In terms of tissue distribution, expressed in osteoclasts (at protein level). Highly expressed in vascular smooth muscle.

Its subcellular location is the cytoplasm. The protein resides in the cell junction. The protein localises to the focal adhesion. It localises to the nucleus. It is found in the perinuclear region. Its subcellular location is the cell projection. The protein resides in the podosome. The protein localises to the cell membrane. Functionally, transcriptional coactivator for androgen receptor (AR) and serum response factor (SRF). Contributes to the regulation of cell adhesion, spreading and cell migration and acts as a negative regulator in integrin-mediated cell adhesion events. Suppresses the integrin-induced tyrosine phosphorylation of paxillin (PXN). May play a critical role as an adapter protein in the formation of the adhesion zone in osteoclasts. Negatively regulates B-cell antigen receptor (BCR) signaling. The chain is Leupaxin (Lpxn) from Mus musculus (Mouse).